We begin with the raw amino-acid sequence, 432 residues long: Sensor histidine kinase YrkQ (432 aa).

The Cytoplasmic segment spans residues 1 to 12 (MAHLKFTLTKKL). The helical transmembrane segment at 13–33 (ALLIMVAAIVSGVIFLTLQKI) threads the bilayer. The Extracellular segment spans residues 34 to 145 (TDDLIEGYLS…GFYSSRYYDL (112 aa)). A helical membrane pass occupies residues 146-166 (AFALDLLGATLIFLIIVLFGI). An HAMP domain is found at 167–219 (RQSLRYLKTIHQEIHILEGGELDYEMTIKGHDELAMIAKSIEDLRKAFLDKLK). Residues 167-432 (RQSLRYLKTI…IVLRFWNTKM (266 aa)) are Cytoplasmic-facing. Positions 234 to 432 (EMSHDMRTPL…IVLRFWNTKM (199 aa)) constitute a Histidine kinase domain. A Phosphohistidine; by autocatalysis modification is found at His-237.

Its subcellular location is the cell membrane. The catalysed reaction is ATP + protein L-histidine = ADP + protein N-phospho-L-histidine.. In terms of biological role, member of the two-component regulatory system YrkQ/YrkP. Probably activates YrkP by phosphorylation. The chain is Sensor histidine kinase YrkQ (yrkQ) from Bacillus subtilis (strain 168).